Reading from the N-terminus, the 762-residue chain is Homeobox-leucine zipper protein MERISTEM L1 (762 aa).

The tract at residues 13–72 is disordered; that stretch reads MFDMTPKNSENDLGITGSHEEDFETKSGAEVTMENPLEEELQDPNQRPNKKKRYHRHTQR. Basic and acidic residues predominate over residues 30–39; that stretch reads SHEEDFETKS. Basic residues predominate over residues 60 to 71; the sequence is PNKKKRYHRHTQ. A DNA-binding region (homeobox) is located at residues 62-121; the sequence is KKKRYHRHTQRQIQELESFFKECPHPDDKQRKELSRELSLEPLQVKFWFQNKRTQMKAQH. A coiled-coil region spans residues 110–192; sequence FQNKRTQMKA…DRISAIAAKY (83 aa). The 232-residue stretch at 253–484 folds into the START domain; the sequence is SEADKPMIVE…LDRQCERLAS (232 aa).

This sequence belongs to the HD-ZIP homeobox family. Class IV subfamily. Interacts with GAI/RGA2, RGA/RGA1/GRS, RGL2/SCL19 and PDF2. Interacts with AIL7/PLT7, ANT, BBM and AIL1.

The protein localises to the nucleus. Functionally, probable transcription factor involved in cell specification and pattern formation during embryogenesis. Binds to the L1 box DNA sequence 5'-TAAATG[CT]A-3'. Plays a role in maintaining the identity of L1 cells, possibly by interacting with their L1 box or other target-gene promoters; binds to the LIP1 gene promoter and stimulates its expression upon imbibition. Acts as a positive regulator of gibberellins (GAs)-regulated epidermal gene expression (e.g. LIP1, LIP2, LTP1, FDH and PDF1). Functionally redundant to PDF2. Seems to promote cell differentiation. This is Homeobox-leucine zipper protein MERISTEM L1 from Arabidopsis thaliana (Mouse-ear cress).